A 327-amino-acid polypeptide reads, in one-letter code: Microtubule-associated protein RP/EB family member 2 (327 aa).

The segment covering 1 to 17 (MPGPTQTLSPNGENNND) has biased composition (polar residues). The disordered stretch occupies residues 1 to 20 (MPGPTQTLSPNGENNNDVIH). One can recognise a Calponin-homology (CH) domain in the interval 56–158 (TMSRHDIIAW…FIQWFKKFFD (103 aa)). 2 disordered regions span residues 170-238 (EARQ…DKDL) and 295-327 (LYSS…QEEY). The EB1 C-terminal domain maps to 234–304 (SDKDLETQVS…LYSSEEQESH (71 aa)).

It belongs to the MAPRE family.

It localises to the cytoplasm. The protein resides in the cytoskeleton. May be involved in microtubule polymerization, and spindle function by stabilizing microtubules and anchoring them at centrosomes. This Xenopus laevis (African clawed frog) protein is Microtubule-associated protein RP/EB family member 2 (mapre2).